A 180-amino-acid chain; its full sequence is ATP-dependent protease subunit HslV (180 aa).

Residue T5 is part of the active site. 3 residues coordinate Na(+): G161, C164, and T167.

This sequence belongs to the peptidase T1B family. HslV subfamily. A double ring-shaped homohexamer of HslV is capped on each side by a ring-shaped HslU homohexamer. The assembly of the HslU/HslV complex is dependent on binding of ATP.

It localises to the cytoplasm. The catalysed reaction is ATP-dependent cleavage of peptide bonds with broad specificity.. Its activity is regulated as follows. Allosterically activated by HslU binding. Functionally, protease subunit of a proteasome-like degradation complex believed to be a general protein degrading machinery. The polypeptide is ATP-dependent protease subunit HslV (Campylobacter curvus (strain 525.92)).